We begin with the raw amino-acid sequence, 271 residues long: Formamidopyrimidine-DNA glycosylase (271 aa).

Catalysis depends on Pro2, which acts as the Schiff-base intermediate with DNA. Glu3 functions as the Proton donor in the catalytic mechanism. The active-site Proton donor; for beta-elimination activity is the Lys57. Residues His90, Arg109, and Lys151 each coordinate DNA. The FPG-type zinc finger occupies 236 to 270 (HVYGRGGETCTQCGNLLSEIRLGQRTTVFCGICQT). Arg260 (proton donor; for delta-elimination activity) is an active-site residue.

It belongs to the FPG family. Monomer. Requires Zn(2+) as cofactor.

It carries out the reaction Hydrolysis of DNA containing ring-opened 7-methylguanine residues, releasing 2,6-diamino-4-hydroxy-5-(N-methyl)formamidopyrimidine.. It catalyses the reaction 2'-deoxyribonucleotide-(2'-deoxyribose 5'-phosphate)-2'-deoxyribonucleotide-DNA = a 3'-end 2'-deoxyribonucleotide-(2,3-dehydro-2,3-deoxyribose 5'-phosphate)-DNA + a 5'-end 5'-phospho-2'-deoxyribonucleoside-DNA + H(+). Functionally, involved in base excision repair of DNA damaged by oxidation or by mutagenic agents. Acts as a DNA glycosylase that recognizes and removes damaged bases. Has a preference for oxidized purines, such as 7,8-dihydro-8-oxoguanine (8-oxoG). Has AP (apurinic/apyrimidinic) lyase activity and introduces nicks in the DNA strand. Cleaves the DNA backbone by beta-delta elimination to generate a single-strand break at the site of the removed base with both 3'- and 5'-phosphates. This chain is Formamidopyrimidine-DNA glycosylase, found in Shewanella sp. (strain MR-7).